A 605-amino-acid polypeptide reads, in one-letter code: uncharacterized protein (605 aa).

Disordered regions lie at residues 10–78 and 216–248; these read RRGG…FPPA and RAPDCPSPRTPMVKPPFRIPDAKPGLTPSVRNP. The span at 20–48 shows a compositional bias: low complexity; sequence AGGRPAAGGRPAAGGRPAAGSRAAAGAAG. Positions 220–233 are enriched in pro residues; that stretch reads CPSPRTPMVKPPFR.

This is an uncharacterized protein from Dryophytes versicolor (chameleon treefrog).